Consider the following 431-residue polypeptide: Enolase (431 aa).

Gln166 serves as a coordination point for (2R)-2-phosphoglycerate. Glu208 (proton donor) is an active-site residue. The Mg(2+) site is built by Asp245, Glu289, and Asp316. Positions 341, 370, 371, and 392 each coordinate (2R)-2-phosphoglycerate. The Proton acceptor role is filled by Lys341.

Belongs to the enolase family. It depends on Mg(2+) as a cofactor.

Its subcellular location is the cytoplasm. It is found in the secreted. The protein localises to the cell surface. It catalyses the reaction (2R)-2-phosphoglycerate = phosphoenolpyruvate + H2O. It participates in carbohydrate degradation; glycolysis; pyruvate from D-glyceraldehyde 3-phosphate: step 4/5. In terms of biological role, catalyzes the reversible conversion of 2-phosphoglycerate (2-PG) into phosphoenolpyruvate (PEP). It is essential for the degradation of carbohydrates via glycolysis. The polypeptide is Enolase (Ruminiclostridium cellulolyticum (strain ATCC 35319 / DSM 5812 / JCM 6584 / H10) (Clostridium cellulolyticum)).